The sequence spans 245 residues: Probable octanoyltransferase 2 (245 aa).

Residues 38 to 227 (MEYKPVLYFQ…SIEKEFDIKE (190 aa)) form the BPL/LPL catalytic domain. Residues 89 to 96 (RGGYETYH), 157 to 159 (SIG), and 170 to 172 (GMA) contribute to the substrate site. Catalysis depends on Cys-188, which acts as the Acyl-thioester intermediate.

It belongs to the LipB family.

The protein resides in the cytoplasm. It catalyses the reaction octanoyl-[ACP] + L-lysyl-[protein] = N(6)-octanoyl-L-lysyl-[protein] + holo-[ACP] + H(+). It participates in protein modification; protein lipoylation via endogenous pathway; protein N(6)-(lipoyl)lysine from octanoyl-[acyl-carrier-protein]: step 1/2. Its function is as follows. Catalyzes the transfer of endogenously produced octanoic acid from octanoyl-acyl-carrier-protein onto the lipoyl domains of lipoate-dependent enzymes. Lipoyl-ACP can also act as a substrate although octanoyl-ACP is likely to be the physiological substrate. The polypeptide is Probable octanoyltransferase 2 (Picrophilus torridus (strain ATCC 700027 / DSM 9790 / JCM 10055 / NBRC 100828 / KAW 2/3)).